A 467-amino-acid polypeptide reads, in one-letter code: Cysteine--tRNA ligase (467 aa).

Residue C28 coordinates Zn(2+). The 'HIGH' region signature appears at 30–40; it reads PTVYNYIHVGN. Positions 212, 237, and 241 each coordinate Zn(2+). The 'KMSKS' region motif lies at 269–273; that stretch reads KMSKS. K272 contributes to the ATP binding site.

Belongs to the class-I aminoacyl-tRNA synthetase family. Monomer. Zn(2+) serves as cofactor.

It is found in the cytoplasm. It carries out the reaction tRNA(Cys) + L-cysteine + ATP = L-cysteinyl-tRNA(Cys) + AMP + diphosphate. The polypeptide is Cysteine--tRNA ligase (Oenococcus oeni (strain ATCC BAA-331 / PSU-1)).